A 101-amino-acid polypeptide reads, in one-letter code: Small ribosomal subunit protein uS14 (101 aa).

Belongs to the universal ribosomal protein uS14 family. As to quaternary structure, part of the 30S ribosomal subunit. Contacts proteins S3 and S10.

In terms of biological role, binds 16S rRNA, required for the assembly of 30S particles and may also be responsible for determining the conformation of the 16S rRNA at the A site. This chain is Small ribosomal subunit protein uS14, found in Actinobacillus succinogenes (strain ATCC 55618 / DSM 22257 / CCUG 43843 / 130Z).